A 202-amino-acid polypeptide reads, in one-letter code: Holliday junction resolvase RecU (202 aa).

Residues threonine 85, aspartate 87, glutamate 100, and glutamine 119 each contribute to the Mg(2+) site.

It belongs to the RecU family. Requires Mg(2+) as cofactor.

The protein localises to the cytoplasm. The catalysed reaction is Endonucleolytic cleavage at a junction such as a reciprocal single-stranded crossover between two homologous DNA duplexes (Holliday junction).. In terms of biological role, endonuclease that resolves Holliday junction intermediates in genetic recombination. Cleaves mobile four-strand junctions by introducing symmetrical nicks in paired strands. Promotes annealing of linear ssDNA with homologous dsDNA. Required for DNA repair, homologous recombination and chromosome segregation. The polypeptide is Holliday junction resolvase RecU (Streptococcus pyogenes serotype M6 (strain ATCC BAA-946 / MGAS10394)).